We begin with the raw amino-acid sequence, 196 residues long: Small ribosomal subunit protein uS4c (196 aa).

Residues 16-36 (GALPGLTRKTPKSGSNLKKKF) form a disordered region. The S4 RNA-binding domain maps to 89–169 (MRLDNILFRL…LPKHLTIDTL (81 aa)).

It belongs to the universal ribosomal protein uS4 family. As to quaternary structure, part of the 30S ribosomal subunit. Contacts protein S5. The interaction surface between S4 and S5 is involved in control of translational fidelity.

The protein localises to the plastid. It is found in the chloroplast. Its function is as follows. One of the primary rRNA binding proteins, it binds directly to 16S rRNA where it nucleates assembly of the body of the 30S subunit. In terms of biological role, with S5 and S12 plays an important role in translational accuracy. This is Small ribosomal subunit protein uS4c (rps4) from Brachypodium pinnatum (Tor grass).